The following is a 535-amino-acid chain: KNR4/SMI1 homolog (535 aa).

Over residues 354–363 the composition is skewed to basic and acidic residues; sequence ERKLPEEPKR. The segment at 354–535 is disordered; the sequence is ERKLPEEPKR…LKDDFENVAL (182 aa). Polar residues-rich tracts occupy residues 364-384, 397-407, and 456-469; these read TVSSSQGSQNTVEPAEQQETA, TSLSVDNTGTK, and ESTNAVENTETSQE. Residues 474–483 show a composition bias toward basic and acidic residues; sequence TSEKPEEKPK. Over residues 484–494 the composition is skewed to basic residues; sequence KQSKKASKKKG. Composition is skewed to basic and acidic residues over residues 495-509 and 524-535; these read KKDEKKDTDSKTKEP and EKLKDDFENVAL.

Belongs to the KNR4/SMI1 family.

This chain is KNR4/SMI1 homolog, found in Kluyveromyces lactis (strain ATCC 8585 / CBS 2359 / DSM 70799 / NBRC 1267 / NRRL Y-1140 / WM37) (Yeast).